The primary structure comprises 567 residues: Urease subunit alpha (567 aa).

Residues 129 to 567 (GGVDSHIHFI…LPLAQRYFLF (439 aa)) form the Urease domain. His-134, His-136, and Lys-217 together coordinate Ni(2+). The residue at position 217 (Lys-217) is an N6-carboxylysine. His-219 is a binding site for substrate. His-246 and His-272 together coordinate Ni(2+). Catalysis depends on His-320, which acts as the Proton donor. Asp-360 provides a ligand contact to Ni(2+).

This sequence belongs to the metallo-dependent hydrolases superfamily. Urease alpha subunit family. Heterotrimer of UreA (gamma), UreB (beta) and UreC (alpha) subunits. Three heterotrimers associate to form the active enzyme. The cofactor is Ni cation. In terms of processing, carboxylation allows a single lysine to coordinate two nickel ions.

The protein localises to the cytoplasm. The enzyme catalyses urea + 2 H2O + H(+) = hydrogencarbonate + 2 NH4(+). It functions in the pathway nitrogen metabolism; urea degradation; CO(2) and NH(3) from urea (urease route): step 1/1. In Pseudomonas putida (strain ATCC 700007 / DSM 6899 / JCM 31910 / BCRC 17059 / LMG 24140 / F1), this protein is Urease subunit alpha.